The primary structure comprises 237 residues: uncharacterized protein (237 aa).

A DPCK domain is found at 13 to 218 (VVGLSGGVAT…KSWKPYIFRV (206 aa)). 18 to 25 (GGVATGKS) contributes to the ATP binding site.

It belongs to the CoaE family.

This is an uncharacterized protein from Caenorhabditis elegans.